An 880-amino-acid polypeptide reads, in one-letter code: Alanine--tRNA ligase (880 aa).

Histidine 567, histidine 571, cysteine 669, and histidine 673 together coordinate Zn(2+).

This sequence belongs to the class-II aminoacyl-tRNA synthetase family. It depends on Zn(2+) as a cofactor.

It localises to the cytoplasm. It carries out the reaction tRNA(Ala) + L-alanine + ATP = L-alanyl-tRNA(Ala) + AMP + diphosphate. Catalyzes the attachment of alanine to tRNA(Ala) in a two-step reaction: alanine is first activated by ATP to form Ala-AMP and then transferred to the acceptor end of tRNA(Ala). Also edits incorrectly charged Ser-tRNA(Ala) and Gly-tRNA(Ala) via its editing domain. In Bacillus cereus (strain ATCC 14579 / DSM 31 / CCUG 7414 / JCM 2152 / NBRC 15305 / NCIMB 9373 / NCTC 2599 / NRRL B-3711), this protein is Alanine--tRNA ligase.